A 297-amino-acid chain; its full sequence is Glucose-6-phosphate 1-epimerase (297 aa).

Substrate contacts are provided by Arg-57, Gln-81, and Arg-86. Ser-88 is subject to Phosphoserine. His-159 is an active-site residue. Asp-203 serves as a coordination point for substrate. Glu-264 is a catalytic residue.

It belongs to the glucose-6-phosphate 1-epimerase family.

The enzyme catalyses alpha-D-glucose 6-phosphate = beta-D-glucose 6-phosphate. Functionally, catalyzes the interconversion between the alpha and beta anomers from at least three hexose 6-phosphate sugars (Glc6P, Gal6P, and Man6P). The protein is Glucose-6-phosphate 1-epimerase of Saccharomyces cerevisiae (strain ATCC 204508 / S288c) (Baker's yeast).